The primary structure comprises 382 residues: Apolipoprotein A-IV (382 aa).

A signal peptide spans 1 to 20 (MFLRAVVLTLALVAVTGARA). A run of 13 repeats spans residues 33–54 (DYFS…QSEL), 60–81 (ALFQ…KKLV), 82–103 (PFAT…EEIR), 115–136 (PHAN…QRLG), 137–158 (PYAD…RHLT), 159–180 (SHAQ…SSLT), 181–202 (PYAD…GHLT), 203–224 (PYAD…RSLA), 225–246 (PYAQ…FQMK), 247–268 (KNAE…QRLA), 269–286 (PVVE…KGLQ), 287–308 (ESLA…HNMG), and 309–330 (PYGD…QKLG). Residues 33–330 (DYFSQLSNNA…QVEELRQKLG (298 aa)) form a 13 X 22 AA approximate tandem repeats region. The interval 362 to 382 (ENQDMPLALPEQEQAPGPLES) is disordered.

It belongs to the apolipoprotein A1/A4/E family. As to quaternary structure, homodimer.

It is found in the secreted. May have a role in chylomicrons and VLDL secretion and catabolism. Required for efficient activation of lipoprotein lipase by ApoC-II; potent activator of LCAT. Apoa-IV is a major component of HDL and chylomicrons. This chain is Apolipoprotein A-IV (APOA4), found in Acinonyx jubatus (Cheetah).